We begin with the raw amino-acid sequence, 531 residues long: Probable cytochrome P450 4e1 (531 aa).

Heme contacts are provided by E307 and C444.

It belongs to the cytochrome P450 family. The cofactor is heme.

Its subcellular location is the endoplasmic reticulum membrane. The protein localises to the microsome membrane. In terms of biological role, may be involved in the metabolism of insect hormones and in the breakdown of synthetic insecticides. This Drosophila melanogaster (Fruit fly) protein is Probable cytochrome P450 4e1 (Cyp4e1).